Consider the following 147-residue polypeptide: Transcriptional regulator MraZ (147 aa).

SpoVT-AbrB domains follow at residues glutamine 5–glutamate 47 and threonine 76–lysine 123.

Belongs to the MraZ family. As to quaternary structure, forms oligomers.

It is found in the cytoplasm. The protein resides in the nucleoid. This Mycoplasmopsis synoviae (strain 53) (Mycoplasma synoviae) protein is Transcriptional regulator MraZ.